The chain runs to 183 residues: MLEWLNPVKGFGVTFHTMFKKVPTVEYPEVKAPTMPRFHGRHQLNRWPDGLEKCIGCELCAWACPADAIYVEAGDNTEEERYSPGERYGRVYQINYLRCILCGLCVEACPTRALTMTNEYELADDSRESLIYTKEQLLAPLQQGMEAPPHPMRLGETEKDYYRLGRDDNAAARADEQNSEAVQ.

4Fe-4S ferredoxin-type domains are found at residues 44 to 74 (LNRW…VEAG) and 90 to 119 (RVYQ…MTNE). Residues C54, C57, C60, C64, C99, C102, C105, and C109 each coordinate [4Fe-4S] cluster. The disordered stretch occupies residues 143–183 (QGMEAPPHPMRLGETEKDYYRLGRDDNAAARADEQNSEAVQ). Residues 153-176 (RLGETEKDYYRLGRDDNAAARADE) are compositionally biased toward basic and acidic residues.

It belongs to the complex I 23 kDa subunit family. As to quaternary structure, NDH-1 is composed of 14 different subunits. Subunits NuoA, H, J, K, L, M, N constitute the membrane sector of the complex. [4Fe-4S] cluster serves as cofactor.

It localises to the cell membrane. It carries out the reaction a quinone + NADH + 5 H(+)(in) = a quinol + NAD(+) + 4 H(+)(out). In terms of biological role, NDH-1 shuttles electrons from NADH, via FMN and iron-sulfur (Fe-S) centers, to quinones in the respiratory chain. The immediate electron acceptor for the enzyme in this species is believed to be ubiquinone. Couples the redox reaction to proton translocation (for every two electrons transferred, four hydrogen ions are translocated across the cytoplasmic membrane), and thus conserves the redox energy in a proton gradient. The polypeptide is NADH-quinone oxidoreductase subunit I (Thermobifida fusca (strain YX)).